A 1274-amino-acid chain; its full sequence is Myosin-1 (1274 aa).

Residues 1 to 28 (MAPSKKAGKKGAVGGFLSGASKPQKVQK) are disordered. A Myosin motor domain is found at 41–721 (AGVPDMTLLS…TLFYLEGERD (681 aa)). 134-141 (GESGAGKT) contacts ATP. Residue Ser363 is modified to Phosphoserine. The segment at 410–492 (VIGVLDIYGF…AGIFATLNDA (83 aa)) is actin-binding. 2 IQ domains span residues 725–745 (HTMA…KHEA) and 746–771 (ATKI…YGHQ). A TH1 domain is found at 779-969 (RRRFSLLGMR…TIQVGSGEPP (191 aa)). 3 disordered regions span residues 951–1029 (RGDA…PVVT), 1042–1071 (ARAP…PKEF), and 1116–1248 (PSNY…QVAQ). Positions 957–974 (KSHTIQVGSGEPPNSLSN) are enriched in polar residues. Positions 1042-1053 (ARAPPSIPGRAA) are enriched in low complexity. Composition is skewed to pro residues over residues 1054–1067 (APPP…PAGP) and 1126–1138 (APPP…PPSR). One can recognise an SH3 domain in the interval 1067–1125 (PPKEFYKALYNFTGQEGEMNLVKGEEVEVKEKDDNGWWMVVKNGQEGWAPSNYLKKVEQ). 2 stretches are compositionally biased toward low complexity: residues 1139 to 1157 (PVAA…PAVT) and 1170 to 1226 (AASA…IGGK).

The protein belongs to the TRAFAC class myosin-kinesin ATPase superfamily. Myosin family. In terms of processing, phosphorylation of the TEDS site (Ser-363) is required for the polarization of the actin cytoskeleton. Phosphorylation probably activates the myosin-I ATPase activity.

The protein resides in the cytoplasm. The protein localises to the cytoskeleton. It is found in the actin patch. Its function is as follows. Type-I myosin implicated in the organization of the actin cytoskeleton. Required for proper actin cytoskeleton polarization. At the cell cortex, assembles in patch-like structures together with proteins from the actin-polymerizing machinery and promotes actin assembly. Functions as actin nucleation-promoting factor (NPF) for the Arp2/3 complex. In Cryptococcus neoformans var. neoformans serotype D (strain B-3501A) (Filobasidiella neoformans), this protein is Myosin-1 (MYO1).